Here is a 147-residue protein sequence, read N- to C-terminus: DNA-directed RNA polymerase RPB6 homolog (147 aa).

It belongs to the archaeal RpoK/eukaryotic RPB6 RNA polymerase subunit family. As to quaternary structure, part of the viral DNA-directed RNA polymerase that consists of 8 polII-like subunits (RPB1, RPB2, RPB3, RPB5, RPB6, RPB7, RPB9, RPB10), a capping enzyme and a termination factor.

The protein resides in the host cytoplasm. It localises to the virion. Component of the DNA-directed RNA polymerase (RNAP) that catalyzes the transcription in the cytoplasm of viral DNA into RNA using the four ribonucleoside triphosphates as substrates. The chain is DNA-directed RNA polymerase RPB6 homolog from Ornithodoros (relapsing fever ticks).